A 468-amino-acid chain; its full sequence is ATP synthase subunit beta (468 aa).

155–162 (GGAGVGKT) lines the ATP pocket.

This sequence belongs to the ATPase alpha/beta chains family. In terms of assembly, F-type ATPases have 2 components, CF(1) - the catalytic core - and CF(0) - the membrane proton channel. CF(1) has five subunits: alpha(3), beta(3), gamma(1), delta(1), epsilon(1). CF(0) has three main subunits: a(1), b(2) and c(9-12). The alpha and beta chains form an alternating ring which encloses part of the gamma chain. CF(1) is attached to CF(0) by a central stalk formed by the gamma and epsilon chains, while a peripheral stalk is formed by the delta and b chains.

The protein localises to the cell membrane. It catalyses the reaction ATP + H2O + 4 H(+)(in) = ADP + phosphate + 5 H(+)(out). Its function is as follows. Produces ATP from ADP in the presence of a proton gradient across the membrane. The catalytic sites are hosted primarily by the beta subunits. The protein is ATP synthase subunit beta of Streptococcus pyogenes serotype M49 (strain NZ131).